We begin with the raw amino-acid sequence, 314 residues long: Olfactory receptor 9I1 (314 aa).

At 1 to 25 (MAKNNLTRVTEFILMGFMDHPKLEI) the chain is on the extracellular side. N-linked (GlcNAc...) asparagine glycosylation is present at Asn-5. Residues 26–46 (PLFLVFLSFYLVTLLGNVGMI) form a helical membrane-spanning segment. At 47 to 54 (MLIQVDVK) the chain is on the cytoplasmic side. A helical transmembrane segment spans residues 55 to 75 (LYTPMYFFLSHLSLLDACYTS). Residues 76 to 99 (VITPQILATLATGKTVISYGHCAA) lie on the Extracellular side of the membrane. A disulfide bridge connects residues Cys-97 and Cys-189. Residues 100–120 (QFFLFTICAGTECFLLAVMAY) traverse the membrane as a helical segment. At 121-139 (DRYAAIRNPLLYTVAMNPR) the chain is on the cytoplasmic side. Residues 140 to 160 (LCWSLVVGAYVCGVSGAILRT) form a helical membrane-spanning segment. The Extracellular portion of the chain corresponds to 161 to 197 (TCTFTLSFCKDNQINFFFCDLPPLLKLACSDTANIEI). A helical transmembrane segment spans residues 198 to 217 (VIIFFGNFVILANASVILIS). Residues 218-237 (YLLIIKTILKVKSSGGRAKT) are Cytoplasmic-facing. A helical transmembrane segment spans residues 238 to 258 (FSTCASHITAVALFFGALIFM). Residues 259-271 (YLQSGSGKSLEED) lie on the Extracellular side of the membrane. The chain crosses the membrane as a helical span at residues 272-292 (KVVSVFYTVVIPMLNPLIYSL). At 293-314 (RNKDVKDAFRKVARRLQVSLSM) the chain is on the cytoplasmic side.

Belongs to the G-protein coupled receptor 1 family.

Its subcellular location is the cell membrane. Odorant receptor. In Homo sapiens (Human), this protein is Olfactory receptor 9I1 (OR9I1).